The sequence spans 89 residues: Small ribosomal subunit protein uS15 (89 aa).

The protein belongs to the universal ribosomal protein uS15 family. Part of the 30S ribosomal subunit. Forms a bridge to the 50S subunit in the 70S ribosome, contacting the 23S rRNA.

In terms of biological role, one of the primary rRNA binding proteins, it binds directly to 16S rRNA where it helps nucleate assembly of the platform of the 30S subunit by binding and bridging several RNA helices of the 16S rRNA. Its function is as follows. Forms an intersubunit bridge (bridge B4) with the 23S rRNA of the 50S subunit in the ribosome. The sequence is that of Small ribosomal subunit protein uS15 from Salinispora arenicola (strain CNS-205).